The chain runs to 199 residues: Proteasome subunit beta type-2-B (199 aa).

Met-1 is subject to N-acetylmethionine.

The protein belongs to the peptidase T1B family. In terms of assembly, component of the 20S core complex of the 26S proteasome. The 26S proteasome is composed of a core protease (CP), known as the 20S proteasome, capped at one or both ends by the 19S regulatory particle (RP/PA700). The 20S proteasome core is composed of 28 subunits that are arranged in four stacked rings, resulting in a barrel-shaped structure. The two end rings are each formed by seven alpha subunits, and the two central rings are each formed by seven beta subunits. The catalytic chamber with the active sites is on the inside of the barrel. Ubiquitous low levels, higher expression in siliques and flowers.

It localises to the cytoplasm. Its subcellular location is the nucleus. Non-catalytic component of the proteasome, a multicatalytic proteinase complex which is characterized by its ability to cleave peptides with Arg, Phe, Tyr, Leu, and Glu adjacent to the leaving group at neutral or slightly basic pH. The proteasome has an ATP-dependent proteolytic activity. In Arabidopsis thaliana (Mouse-ear cress), this protein is Proteasome subunit beta type-2-B (PBD2).